Consider the following 257-residue polypeptide: 5'-nucleotidase SurE (257 aa).

Aspartate 9, aspartate 10, serine 40, and asparagine 92 together coordinate a divalent metal cation.

This sequence belongs to the SurE nucleotidase family. A divalent metal cation is required as a cofactor.

The protein localises to the cytoplasm. The catalysed reaction is a ribonucleoside 5'-phosphate + H2O = a ribonucleoside + phosphate. In terms of biological role, nucleotidase that shows phosphatase activity on nucleoside 5'-monophosphates. The protein is 5'-nucleotidase SurE of Alkalilimnicola ehrlichii (strain ATCC BAA-1101 / DSM 17681 / MLHE-1).